We begin with the raw amino-acid sequence, 297 residues long: N-acetylmuramic acid 6-phosphate etherase (297 aa).

Positions 55–218 (ATDALKSGGR…STGAMVKFGK (164 aa)) constitute an SIS domain. The Proton donor role is filled by E83. E114 is a catalytic residue.

It belongs to the GCKR-like family. MurNAc-6-P etherase subfamily. Homodimer.

It catalyses the reaction N-acetyl-D-muramate 6-phosphate + H2O = N-acetyl-D-glucosamine 6-phosphate + (R)-lactate. It functions in the pathway amino-sugar metabolism; 1,6-anhydro-N-acetylmuramate degradation. It participates in amino-sugar metabolism; N-acetylmuramate degradation. Its pathway is cell wall biogenesis; peptidoglycan recycling. Its function is as follows. Specifically catalyzes the cleavage of the D-lactyl ether substituent of MurNAc 6-phosphate, producing GlcNAc 6-phosphate and D-lactate. Together with AnmK, is also required for the utilization of anhydro-N-acetylmuramic acid (anhMurNAc) either imported from the medium or derived from its own cell wall murein, and thus plays a role in cell wall recycling. The chain is N-acetylmuramic acid 6-phosphate etherase from Enterobacter sp. (strain 638).